We begin with the raw amino-acid sequence, 392 residues long: S-adenosylmethionine synthase (392 aa).

ATP is bound at residue His-17. Mg(2+) is bound at residue Asp-19. Glu-45 is a binding site for K(+). Positions 58 and 102 each coordinate L-methionine. A flexible loop region spans residues Gln-102 to Ala-112. ATP is bound by residues Asp-169–Lys-171, Lys-235–Phe-236, Asp-244, Arg-250–Lys-251, Ala-267, and Lys-271. Asp-244 serves as a coordination point for L-methionine. Residue Lys-275 coordinates L-methionine.

The protein belongs to the AdoMet synthase family. As to quaternary structure, homotetramer; dimer of dimers. Requires Mg(2+) as cofactor. The cofactor is K(+).

Its subcellular location is the cytoplasm. It catalyses the reaction L-methionine + ATP + H2O = S-adenosyl-L-methionine + phosphate + diphosphate. It functions in the pathway amino-acid biosynthesis; S-adenosyl-L-methionine biosynthesis; S-adenosyl-L-methionine from L-methionine: step 1/1. In terms of biological role, catalyzes the formation of S-adenosylmethionine (AdoMet) from methionine and ATP. The overall synthetic reaction is composed of two sequential steps, AdoMet formation and the subsequent tripolyphosphate hydrolysis which occurs prior to release of AdoMet from the enzyme. The chain is S-adenosylmethionine synthase from Methylobacterium nodulans (strain LMG 21967 / CNCM I-2342 / ORS 2060).